The primary structure comprises 109 residues: Nucleoid-associated protein VV2410 (109 aa).

Residues 1–22 (MFGKGGMGNLMKQAQQMQERMQ) are disordered.

This sequence belongs to the YbaB/EbfC family. In terms of assembly, homodimer.

The protein resides in the cytoplasm. Its subcellular location is the nucleoid. Binds to DNA and alters its conformation. May be involved in regulation of gene expression, nucleoid organization and DNA protection. The protein is Nucleoid-associated protein VV2410 of Vibrio vulnificus (strain YJ016).